The sequence spans 279 residues: Zinc-finger homeodomain protein 1 (279 aa).

Residues 1-13 (MDFDDHDDGDEEM) show a composition bias toward acidic residues. Residues 1-47 (MDFDDHDDGDEEMPPMPVSSSYETPPQHGLAGGGMAPKPPGEIGSHV) are disordered. The segment at 57-106 (YRECLKNHAVGIGGHAVDGCGEFMAAGEEGTIDALRCAACNCHRNFHRKE) adopts a ZF-HD dimerization-type; degenerate zinc-finger fold. The tract at residues 157–191 (AAAAAAGGHPQRPLALPSTSHSGRDDGDDLSGMVG) is disordered. The homeobox DNA-binding region spans 215–278 (KKRFRTKFTQ…NNKHTLGKKL (64 aa)).

As to quaternary structure, homo- and heterodimer with other ZFHD proteins.

It is found in the nucleus. Functionally, putative transcription factor. This Oryza sativa subsp. indica (Rice) protein is Zinc-finger homeodomain protein 1 (ZHD1).